A 417-amino-acid polypeptide reads, in one-letter code: Probable histone-binding protein lin-53 (417 aa).

WD repeat units lie at residues 118–158 (NHEG…AVPR), 170–210 (GHTK…NVAG), 220–260 (GHES…PGHC), 263–303 (AHSA…MKLH), 307–347 (SHRD…EDQS), and 364–404 (GHTA…YNEV).

The protein belongs to the WD repeat RBAP46/RBAP48/MSI1 family. In terms of assembly, binds directly to helix 1 of the histone fold of histone H4, a region that is not accessible when H4 is in chromatin. Probable component of a NuRD-like complex, composed of at least lin-53 and hda-1. Interacts with lin-35. Interacts with hda-1; the interaction is direct. Component of the DRM complex, at least composed of lin-9, lin-35, lin-37, lin-52, lin-53, lin-54- dpl-1 and efl-1. Interacts with hcp-3.

The protein localises to the nucleus. Its subcellular location is the chromosome. It localises to the centromere. In terms of biological role, core histone-binding subunit that may target chromatin assembly factors, chromatin remodeling factors and histone deacetylases to their histone substrates in a manner that is regulated by nucleosomal DNA. Required for hcp-3 and his-1 stabilization, localization of hcp-3 to centromeres and for proper chromosome segregation. Synthetic multivulva class B (synMuvB) protein. SynMuvB proteins are required to repress the induction of vulval development by Ras signaling and probably act by forming the multiprotein DRM complex that represses transcription. The chain is Probable histone-binding protein lin-53 from Caenorhabditis elegans.